A 227-amino-acid chain; its full sequence is tRNA (guanine-N(1)-)-methyltransferase (227 aa).

S-adenosyl-L-methionine-binding positions include glycine 107 and 127–132 (LGDFIL).

Belongs to the RNA methyltransferase TrmD family. As to quaternary structure, homodimer.

The protein localises to the cytoplasm. The enzyme catalyses guanosine(37) in tRNA + S-adenosyl-L-methionine = N(1)-methylguanosine(37) in tRNA + S-adenosyl-L-homocysteine + H(+). In terms of biological role, specifically methylates guanosine-37 in various tRNAs. The protein is tRNA (guanine-N(1)-)-methyltransferase of Mesomycoplasma hyopneumoniae (strain 232) (Mycoplasma hyopneumoniae).